The sequence spans 242 residues: Probable transcriptional regulatory protein HEAR0561 (242 aa).

It belongs to the TACO1 family.

The protein resides in the cytoplasm. This is Probable transcriptional regulatory protein HEAR0561 from Herminiimonas arsenicoxydans.